Reading from the N-terminus, the 323-residue chain is Ferrochelatase (323 aa).

Fe cation is bound by residues His196 and Glu277.

It belongs to the ferrochelatase family.

It localises to the cytoplasm. The enzyme catalyses heme b + 2 H(+) = protoporphyrin IX + Fe(2+). The protein operates within porphyrin-containing compound metabolism; protoheme biosynthesis; protoheme from protoporphyrin-IX: step 1/1. Catalyzes the ferrous insertion into protoporphyrin IX. The sequence is that of Ferrochelatase from Haemophilus influenzae (strain PittEE).